Here is a 220-residue protein sequence, read N- to C-terminus: Fructose-6-phosphate aldolase 2 (220 aa).

Lys85 functions as the Schiff-base intermediate with substrate in the catalytic mechanism.

It belongs to the transaldolase family. Type 3A subfamily. As to quaternary structure, homodecamer.

It is found in the cytoplasm. It catalyses the reaction beta-D-fructose 6-phosphate = dihydroxyacetone + D-glyceraldehyde 3-phosphate. Its function is as follows. Catalyzes the reversible formation of fructose 6-phosphate from dihydroxyacetone and D-glyceraldehyde 3-phosphate via an aldolization reaction. Can utilize hydroxyacetone as an alternative donor substrate. Is also able to catalyze the direct self-aldol addition of glycolaldehyde. Is less catalytically efficient than the isozyme FsaA. Does not display transaldolase activity. This chain is Fructose-6-phosphate aldolase 2 (fsaB), found in Escherichia coli (strain K12).